A 104-amino-acid polypeptide reads, in one-letter code: Zinc finger C2H2 protein ECU02_0310 (104 aa).

The segment at 56–80 (FYCCECDRHFITEKVLMEHKRSNPH) adopts a C2H2-type zinc-finger fold.

This sequence belongs to the ZNF593/BUD20 C2H2-type zinc-finger protein family. In terms of assembly, associates with pre-60S ribosomal particles; released from the pre-60S particle very early in the cytoplasm.

Its subcellular location is the nucleus. The protein localises to the cytoplasm. Its function is as follows. Involved in pre-60S ribosomal particles maturation by promoting the nuclear export of the 60S ribosome. The sequence is that of Zinc finger C2H2 protein ECU02_0310 from Encephalitozoon cuniculi (strain GB-M1) (Microsporidian parasite).